Reading from the N-terminus, the 258-residue chain is Acetylglutamate kinase (258 aa).

Residues 44-45 (GG), arginine 66, and asparagine 158 contribute to the substrate site. ATP contacts are provided by residues 181–186 (DVSGIL) and 209–211 (IIT).

The protein belongs to the acetylglutamate kinase family. ArgB subfamily. Homodimer.

The protein resides in the cytoplasm. The enzyme catalyses N-acetyl-L-glutamate + ATP = N-acetyl-L-glutamyl 5-phosphate + ADP. It participates in amino-acid biosynthesis; L-arginine biosynthesis; N(2)-acetyl-L-ornithine from L-glutamate: step 2/4. Functionally, catalyzes the ATP-dependent phosphorylation of N-acetyl-L-glutamate. This chain is Acetylglutamate kinase, found in Escherichia coli O157:H7.